The following is an 82-amino-acid chain: Protein Vpu (82 aa).

Residues 1 to 7 (MQPLQIS) lie on the Extracellular side of the membrane. A helical transmembrane segment spans residues 8–28 (AIVALVVAAIIAIVVWSIALL). Topologically, residues 29–82 (EYRKLLRQRKIDRLIDRIRERAEDSGNESEGDQEELSALVEMGGHDAPWDIDDL) are cytoplasmic. A phosphoserine; by host CK2 mark is found at S53 and S57.

It belongs to the HIV-1 VPU protein family. Homopentamer. Interacts with host CD4 and BRTC; these interactions induce proteasomal degradation of CD4. Interacts with host BST2; this interaction leads to the degradation of host BST2. Interacts with host FBXW11. Interacts with host AP1M1; this interaction plays a role in the mistrafficking and subsequent degradation of host BST2. Interacts with host RANBP2; this interaction allows Vpu to down-regulate host BLM sumoylation. In terms of processing, phosphorylated by host CK2. This phosphorylation is necessary for interaction with human BTRC and degradation of CD4.

Its subcellular location is the host membrane. With respect to regulation, ion channel activity is inhibited by hexamethylene amiloride in vitro. Functionally, enhances virion budding by targeting host CD4 and Tetherin/BST2 to proteasome degradation. Degradation of CD4 prevents any unwanted premature interactions between viral Env and its host receptor CD4 in the endoplasmic reticulum. Degradation of antiretroviral protein Tetherin/BST2 is important for virion budding, as BST2 tethers new viral particles to the host cell membrane. Mechanistically, Vpu bridges either CD4 or BST2 to BTRC, a substrate recognition subunit of the Skp1/Cullin/F-box protein E3 ubiquitin ligase, induces their ubiquitination and subsequent proteasomal degradation. The alteration of the E3 ligase specificity by Vpu seems to promote the degradation of host IKBKB, leading to NF-kappa-B down-regulation and subsequent apoptosis. Acts as a viroporin that forms an oligomeric ion channel in membranes. Modulates the host DNA repair mechanisms to promote degradation of nuclear viral cDNA in cells that are already productively infected in order to suppress immune sensing and proviral hyper-integration (superinfection). Manipulates PML-NBs and modulates SUMOylation of host BLM protein thereby enhancing its DNA-end processing activity toward viral unintegrated linear DNA. Also inhibits RAD52-mediated homologous repair of viral cDNA, preventing the generation of dead-end circular forms of single copies of the long terminal repeat and permitting sustained nucleolytic attack. The protein is Protein Vpu of Homo sapiens (Human).